The primary structure comprises 468 residues: Glutamate--tRNA ligase 2 (468 aa).

Positions 11-21 (PSPTGFLHIGG) match the 'HIGH' region motif. Residues 239–243 (KLSKR) carry the 'KMSKS' region motif. Lys-242 is an ATP binding site.

This sequence belongs to the class-I aminoacyl-tRNA synthetase family. Glutamate--tRNA ligase type 1 subfamily. As to quaternary structure, monomer.

It localises to the cytoplasm. It catalyses the reaction tRNA(Glu) + L-glutamate + ATP = L-glutamyl-tRNA(Glu) + AMP + diphosphate. Functionally, catalyzes the attachment of glutamate to tRNA(Glu) in a two-step reaction: glutamate is first activated by ATP to form Glu-AMP and then transferred to the acceptor end of tRNA(Glu). This Ruegeria pomeroyi (strain ATCC 700808 / DSM 15171 / DSS-3) (Silicibacter pomeroyi) protein is Glutamate--tRNA ligase 2.